The primary structure comprises 32 residues: Acatoxin 1 (32 aa).

3 disulfide bridges follow: Cys1–Cys15, Cys8–Cys20, and Cys14–Cys26.

It is found in the secreted. Its subcellular location is the nematocyst. Functionally, reversibly inhibits acid-sensing ion channels (ASIC) in rat dorsal root ganglia neurons. Reversibly inhibits voltage-gated potassium channels (Kv) in rat DRG neurons. The polypeptide is Acatoxin 1 (Anthopleura cascaia (Sea anemone)).